A 123-amino-acid chain; its full sequence is Holo-[acyl-carrier-protein] synthase (123 aa).

Mg(2+)-binding residues include Asp-8 and Glu-55.

Belongs to the P-Pant transferase superfamily. AcpS family. It depends on Mg(2+) as a cofactor.

The protein resides in the cytoplasm. It carries out the reaction apo-[ACP] + CoA = holo-[ACP] + adenosine 3',5'-bisphosphate + H(+). Transfers the 4'-phosphopantetheine moiety from coenzyme A to a Ser of acyl-carrier-protein. The polypeptide is Holo-[acyl-carrier-protein] synthase (Solidesulfovibrio magneticus (strain ATCC 700980 / DSM 13731 / RS-1) (Desulfovibrio magneticus)).